Consider the following 245-residue polypeptide: tRNA (guanine-N(1)-)-methyltransferase (245 aa).

Residues G111 and 131–136 (MGDYVL) each bind S-adenosyl-L-methionine.

It belongs to the RNA methyltransferase TrmD family. As to quaternary structure, homodimer.

Its subcellular location is the cytoplasm. The enzyme catalyses guanosine(37) in tRNA + S-adenosyl-L-methionine = N(1)-methylguanosine(37) in tRNA + S-adenosyl-L-homocysteine + H(+). In terms of biological role, specifically methylates guanosine-37 in various tRNAs. The polypeptide is tRNA (guanine-N(1)-)-methyltransferase (Staphylococcus aureus (strain Mu3 / ATCC 700698)).